The following is a 311-amino-acid chain: Putative tenascin-XA (311 aa).

Disordered stretches follow at residues Met-1–Leu-47 and Leu-124–Ser-150. Fibronectin type-III domains follow at residues Pro-41–Ala-135, Arg-145–Asp-249, and Leu-250–His-311.

In terms of tissue distribution, expressed in the adrenal gland.

The polypeptide is Putative tenascin-XA (TNXA) (Homo sapiens (Human)).